Reading from the N-terminus, the 424-residue chain is Virion nicking-joining enzyme (424 aa).

PLD phosphodiesterase domains follow at residues 110–137 and 320–346; these read LGGV…DWRS and YSRV…TGNY.

Belongs to the orthopoxvirus OPG042 family.

It is found in the virion. DNA nicking enzyme that cleaves extruded cruciform DNA at its tip. Probably nicks viral hairpins. The protein is Virion nicking-joining enzyme (OPG042) of Vaccinia virus (strain Western Reserve) (VACV).